Consider the following 109-residue polypeptide: Cell division suppressor protein YneA (109 aa).

One can recognise a LysM domain in the interval 40–94 (STVTITKGDTLWELSNKYHNHHHLTTNEFVKWVEDVNDLNSDTAQSLSPGDKLYI).

This sequence belongs to the YneA family.

The protein localises to the cytoplasm. Inhibits cell division during the SOS response. Affects a later stage of the cell division protein assembly, after the assembly of the Z ring, by probably suppressing recruitment of FtsL and/or DivIC to the division machinery. The sequence is that of Cell division suppressor protein YneA from Priestia megaterium (strain DSM 319 / IMG 1521) (Bacillus megaterium).